The following is a 193-amino-acid chain: Orotate phosphoribosyltransferase (193 aa).

5-phospho-alpha-D-ribose 1-diphosphate-binding positions include arginine 85, lysine 89, and 111–119 (DDVLTTGKS). Orotate-binding residues include threonine 115 and arginine 143.

It belongs to the purine/pyrimidine phosphoribosyltransferase family. PyrE subfamily. As to quaternary structure, homodimer. It depends on Mg(2+) as a cofactor.

It carries out the reaction orotidine 5'-phosphate + diphosphate = orotate + 5-phospho-alpha-D-ribose 1-diphosphate. It participates in pyrimidine metabolism; UMP biosynthesis via de novo pathway; UMP from orotate: step 1/2. Functionally, catalyzes the transfer of a ribosyl phosphate group from 5-phosphoribose 1-diphosphate to orotate, leading to the formation of orotidine monophosphate (OMP). In Pyrobaculum aerophilum (strain ATCC 51768 / DSM 7523 / JCM 9630 / CIP 104966 / NBRC 100827 / IM2), this protein is Orotate phosphoribosyltransferase.